The following is a 525-amino-acid chain: GMP synthase [glutamine-hydrolyzing] (525 aa).

Positions Arg9–Leu207 constitute a Glutamine amidotransferase type-1 domain. Cys86 functions as the Nucleophile in the catalytic mechanism. Catalysis depends on residues His181 and Glu183. The region spanning Trp208 to Arg400 is the GMPS ATP-PPase domain. Ser235–Ser241 lines the ATP pocket.

In terms of assembly, homodimer.

It catalyses the reaction XMP + L-glutamine + ATP + H2O = GMP + L-glutamate + AMP + diphosphate + 2 H(+). It functions in the pathway purine metabolism; GMP biosynthesis; GMP from XMP (L-Gln route): step 1/1. In terms of biological role, catalyzes the synthesis of GMP from XMP. In Pectobacterium atrosepticum (strain SCRI 1043 / ATCC BAA-672) (Erwinia carotovora subsp. atroseptica), this protein is GMP synthase [glutamine-hydrolyzing].